The sequence spans 422 residues: Serine--tRNA ligase (422 aa).

229–231 (TAE) provides a ligand contact to L-serine. 260 to 262 (RKE) provides a ligand contact to ATP. E283 is an L-serine binding site. Residue 347–350 (EISS) participates in ATP binding. S383 is an L-serine binding site.

This sequence belongs to the class-II aminoacyl-tRNA synthetase family. Type-1 seryl-tRNA synthetase subfamily. In terms of assembly, homodimer. The tRNA molecule binds across the dimer.

The protein resides in the cytoplasm. It carries out the reaction tRNA(Ser) + L-serine + ATP = L-seryl-tRNA(Ser) + AMP + diphosphate + H(+). The catalysed reaction is tRNA(Sec) + L-serine + ATP = L-seryl-tRNA(Sec) + AMP + diphosphate + H(+). The protein operates within aminoacyl-tRNA biosynthesis; selenocysteinyl-tRNA(Sec) biosynthesis; L-seryl-tRNA(Sec) from L-serine and tRNA(Sec): step 1/1. Catalyzes the attachment of serine to tRNA(Ser). Is also able to aminoacylate tRNA(Sec) with serine, to form the misacylated tRNA L-seryl-tRNA(Sec), which will be further converted into selenocysteinyl-tRNA(Sec). This chain is Serine--tRNA ligase, found in Citrifermentans bemidjiense (strain ATCC BAA-1014 / DSM 16622 / JCM 12645 / Bem) (Geobacter bemidjiensis).